Reading from the N-terminus, the 426-residue chain is 3-phosphoshikimate 1-carboxyvinyltransferase (426 aa).

3-phosphoshikimate is bound by residues Lys22, Ser23, and Arg27. Residue Lys22 participates in phosphoenolpyruvate binding. Phosphoenolpyruvate contacts are provided by Gly96 and Arg124. 3-phosphoshikimate-binding residues include Ser170, Ser171, Gln172, Ser198, Asp314, Asn337, and Lys341. A phosphoenolpyruvate-binding site is contributed by Gln172. Asp314 functions as the Proton acceptor in the catalytic mechanism. Phosphoenolpyruvate is bound by residues Arg345, Arg387, and Lys412.

The protein belongs to the EPSP synthase family. In terms of assembly, monomer.

The protein localises to the cytoplasm. It carries out the reaction 3-phosphoshikimate + phosphoenolpyruvate = 5-O-(1-carboxyvinyl)-3-phosphoshikimate + phosphate. The protein operates within metabolic intermediate biosynthesis; chorismate biosynthesis; chorismate from D-erythrose 4-phosphate and phosphoenolpyruvate: step 6/7. Its function is as follows. Catalyzes the transfer of the enolpyruvyl moiety of phosphoenolpyruvate (PEP) to the 5-hydroxyl of shikimate-3-phosphate (S3P) to produce enolpyruvyl shikimate-3-phosphate and inorganic phosphate. The protein is 3-phosphoshikimate 1-carboxyvinyltransferase of Shewanella baltica (strain OS155 / ATCC BAA-1091).